A 280-amino-acid chain; its full sequence is Protease HtpX (280 aa).

The next 2 membrane-spanning stretches (helical) occupy residues 7-26 and 30-49; these read TFIL…GLLG and GMLI…YWYS. Histidine 129 lines the Zn(2+) pocket. Residue glutamate 130 is part of the active site. Histidine 133 is a Zn(2+) binding site. The next 2 helical transmembrane spans lie at 146-166 and 178-198; these read ATIA…SMFG and VVGM…QMAI. Glutamate 203 is a binding site for Zn(2+).

It belongs to the peptidase M48B family. The cofactor is Zn(2+).

It is found in the cell inner membrane. The chain is Protease HtpX from Legionella pneumophila subsp. pneumophila (strain Philadelphia 1 / ATCC 33152 / DSM 7513).